The sequence spans 652 residues: MAMDEYLWMVILGFIIAFILAFSVGANDVANSFGTAVGSGVVTLRQACILASIFETTGSVLLGAKVGETIRKGIIDVNLYNETVETLMAGEVSAMVGSAVWQLIASFLRLPISGTHCIVGSTIGFSLVAIGTKGVQWMELVKIVASWFISPLLSGFMSGLLFVLIRIFILKKEDPVPNGLRALPVFYAATIAINVFSIMYTGAPVLGLVLPMWAIALISFGVALLFAFFVWLFVCPWMRRKITGKLQKEGALSRVSDESLSKVQEAESPVFKELPGAKANDDSTIPLTGAAGETLGTSEGTSAGSHPRAAYGRALSMTHGSVKSPISNGTFGFDGHTRSDGHVYHTVHKDSGLYKDLLHKIHIDRGPEEKPAQESNYRLLRRNNSYTCYTAAICGLPVHATFRAADSSAPEDSEKLVGDTVSYSKKRLRYDSYSSYCNAVAEAEIEAEEGGVEMKLASELADPDQPREDPAEEEKEEKDAPEVHLLFHFLQVLTACFGSFAHGGNDVSNAIGPLVALWLIYKQGGVTQEAATPVWLLFYGGVGICTGLWVWGRRVIQTMGKDLTPITPSSGFTIELASAFTVVIASNIGLPVSTTHCKVGSVVAVGWIRSRKAVDWRLFRNIFVAWFVTVPVAGLFSAAVMALLMYGILPYV.

At Met1–Glu5 the chain is on the extracellular side. Residues Tyr6–Ala26 traverse the membrane as a helical segment. Residues Asn27 to Gln46 lie on the Cytoplasmic side of the membrane. Residues Ala47–Gly67 form a helical membrane-spanning segment. Residues Glu68–Thr86 are Extracellular-facing. N-linked (GlcNAc...) asparagine glycosylation occurs at Asn81. A helical transmembrane segment spans residues Leu87 to Phe107. Residues Leu108 to Arg109 lie on the Cytoplasmic side of the membrane. The chain crosses the membrane as a helical span at residues Leu110–Ile130. The Extracellular segment spans residues Gly131–Lys142. The helical transmembrane segment at Ile143–Val163 threads the bilayer. Residues Leu164–Thr190 are Cytoplasmic-facing. The chain crosses the membrane as a helical span at residues Ile191–Pro211. Residues Met212 to Trp213 are Extracellular-facing. Residues Ala214–Val234 form a helical membrane-spanning segment. Residues Cys235 to Glu482 are Cytoplasmic-facing. Phosphoserine occurs at positions 253, 256, 259, and 268. The segment at Glu273–Pro307 is disordered. The span at Leu295–Gly304 shows a compositional bias: polar residues. 2 positions are modified to phosphoserine: Ser316 and Ser385. The interval Ser458–Glu477 is disordered. The chain crosses the membrane as a helical span at residues Val483–Gly503. Residues Gly504–Ala530 are Extracellular-facing. Residues Ala531–Trp551 traverse the membrane as a helical segment. Over Gly552–Gly571 the chain is Cytoplasmic. Residues Phe572–Ser586 traverse the membrane as a helical segment. Topologically, residues Asn587–Ser593 are extracellular. The helical transmembrane segment at Thr594–Arg609 threads the bilayer. Over Ser610–Asn621 the chain is Cytoplasmic. Residues Ile622–Ala642 form a helical membrane-spanning segment. The Extracellular portion of the chain corresponds to Leu643 to Val652.

This sequence belongs to the inorganic phosphate transporter (PiT) (TC 2.A.20) family. As to quaternary structure, homodimer. In terms of tissue distribution, ubiquitously expressed.

Its subcellular location is the cell membrane. The protein localises to the apical cell membrane. The enzyme catalyses 2 Na(+)(out) + phosphate(out) = 2 Na(+)(in) + phosphate(in). In terms of biological role, sodium-phosphate symporter which preferentially transports the monovalent form of phosphate with a stoichiometry of two sodium ions per phosphate ion. Plays a critical role in the determination of bone quality and strength by providing phosphate for bone mineralization. Required to maintain normal cerebrospinal fluid phosphate levels. Mediates phosphate-induced calcification of vascular smooth muscle cells (VCMCs) and can functionally compensate for loss of SLC20A1 in VCMCs. (Microbial infection) Functions as a retroviral receptor and confers human cells susceptibility to infection to amphotropic murine leukemia virus (A-MuLV), 10A1 murine leukemia virus (10A1 MLV) and some feline leukemia virus subgroup B (FeLV-B) variants. The protein is Sodium-dependent phosphate transporter 2 (SLC20A2) of Homo sapiens (Human).